Here is a 285-residue protein sequence, read N- to C-terminus: Probable E3 ubiquitin-protein ligase IE1 (285 aa).

Over 1-201 the chain is Cytoplasmic; that stretch reads MASKDSDVRC…LPGYWDRDDR (201 aa). The RING-CH-type zinc finger occupies 124 to 183; sequence SIDEEGKQCWICRDGESLPEARYCNCYGDLQYCHEECLKTWISMSGEKKCKFCQTPYKVN. Zn(2+)-binding residues include C132, C135, C147, C149, H157, C160, C173, and C176. Residues 202–222 traverse the membrane as a helical segment; it reads FVFIAGFIGMGTILAGWIASF. Residues 223 to 238 are Extracellular-facing; the sequence is FYLLVVLCGKYFTYKD. A helical transmembrane segment spans residues 239-259; it reads VMIVVGGLAIIQVVGLMFSLF. Residues 260–285 lie on the Cytoplasmic side of the membrane; sequence MYFQIGNLLRQYINYMTETNIDPLRT.

The protein resides in the membrane. It carries out the reaction S-ubiquitinyl-[E2 ubiquitin-conjugating enzyme]-L-cysteine + [acceptor protein]-L-lysine = [E2 ubiquitin-conjugating enzyme]-L-cysteine + N(6)-ubiquitinyl-[acceptor protein]-L-lysine.. It participates in protein modification; protein ubiquitination. Its function is as follows. Controls the expression of later classes of genes and also of the IE genes (Potential). E3 ubiquitin-protein ligase. E3 ubiquitin ligases accept ubiquitin from an E2 ubiquitin-conjugating enzyme in the form of a thioester and then directly transfer the ubiquitin to targeted substrates. This is Probable E3 ubiquitin-protein ligase IE1 (IE1) from Bovine herpesvirus 4 (strain DN-599) (BoHV-4).